Here is a 159-residue protein sequence, read N- to C-terminus: ATP synthase subunit b (159 aa).

The helical transmembrane segment at 7–27 threads the bilayer; the sequence is VIFMTIINFCILVAILKHFFW.

It belongs to the ATPase B chain family. In terms of assembly, F-type ATPases have 2 components, F(1) - the catalytic core - and F(0) - the membrane proton channel. F(1) has five subunits: alpha(3), beta(3), gamma(1), delta(1), epsilon(1). F(0) has three main subunits: a(1), b(2) and c(10-14). The alpha and beta chains form an alternating ring which encloses part of the gamma chain. F(1) is attached to F(0) by a central stalk formed by the gamma and epsilon chains, while a peripheral stalk is formed by the delta and b chains.

The protein resides in the cell membrane. Functionally, f(1)F(0) ATP synthase produces ATP from ADP in the presence of a proton or sodium gradient. F-type ATPases consist of two structural domains, F(1) containing the extramembraneous catalytic core and F(0) containing the membrane proton channel, linked together by a central stalk and a peripheral stalk. During catalysis, ATP synthesis in the catalytic domain of F(1) is coupled via a rotary mechanism of the central stalk subunits to proton translocation. Component of the F(0) channel, it forms part of the peripheral stalk, linking F(1) to F(0). The chain is ATP synthase subunit b from Clostridium botulinum (strain Alaska E43 / Type E3).